We begin with the raw amino-acid sequence, 339 residues long: D-glycero-alpha-D-manno-heptose 7-phosphate kinase (339 aa).

Residue 17–20 participates in substrate binding; it reads GGTD. ATP-binding positions include Ser57 and 110 to 116; that span reads GSGLGGS. Mg(2+) is bound by residues Ser116 and Glu148. Asp160 serves as the catalytic Proton acceptor.

Belongs to the GHMP kinase family.

The catalysed reaction is D-glycero-alpha-D-manno-heptose 7-phosphate + ATP = D-glycero-alpha-D-manno-heptose 1,7-bisphosphate + ADP + H(+). It functions in the pathway nucleotide-sugar biosynthesis; GDP-D-glycero-alpha-D-manno-heptose biosynthesis; GDP-D-glycero-alpha-D-manno-heptose from D-glycero-alpha-D-manno-heptose 7-phosphate: step 1/3. It participates in capsule biogenesis; capsule polysaccharide biosynthesis. Its function is as follows. Catalyzes the phosphorylation of D-glycero-alpha-D-manno-heptose 7-phosphate at the C-1 position to form D-glycero-alpha-D-manno-heptose 1,7-bisphosphate. The chain is D-glycero-alpha-D-manno-heptose 7-phosphate kinase from Campylobacter jejuni subsp. jejuni serotype O:2 (strain ATCC 700819 / NCTC 11168).